The primary structure comprises 661 residues: UvrABC system protein B (661 aa).

Residues A25 to R182 form the Helicase ATP-binding domain. G38 to T45 is a binding site for ATP. The Beta-hairpin motif lies at Y91 to I114. The Helicase C-terminal domain occupies Q430–I592. The region spanning K621–A656 is the UVR domain.

This sequence belongs to the UvrB family. In terms of assembly, forms a heterotetramer with UvrA during the search for lesions. Interacts with UvrC in an incision complex.

It localises to the cytoplasm. The UvrABC repair system catalyzes the recognition and processing of DNA lesions. A damage recognition complex composed of 2 UvrA and 2 UvrB subunits scans DNA for abnormalities. Upon binding of the UvrA(2)B(2) complex to a putative damaged site, the DNA wraps around one UvrB monomer. DNA wrap is dependent on ATP binding by UvrB and probably causes local melting of the DNA helix, facilitating insertion of UvrB beta-hairpin between the DNA strands. Then UvrB probes one DNA strand for the presence of a lesion. If a lesion is found the UvrA subunits dissociate and the UvrB-DNA preincision complex is formed. This complex is subsequently bound by UvrC and the second UvrB is released. If no lesion is found, the DNA wraps around the other UvrB subunit that will check the other stand for damage. The polypeptide is UvrABC system protein B (Rickettsia massiliae (strain Mtu5)).